A 170-amino-acid polypeptide reads, in one-letter code: MASEAEKTFNRFAAFGESSSSGTEMNNKNFSKLCKDCGIMDGKTVTSTDVDIVFSKVKAKNARTITFQQFKEAVKELGQKRFKGKSPDEVLESIYGLMEGKDPATTGATKATTVGAVDRLTDTSKYTGTHKERFDESGKGKGIAGREVMNDNTGYVSGYKGAGTYDKKTK.

Residues 127–147 are disordered; that stretch reads TGTHKERFDESGKGKGIAGRE. A compositionally biased stretch (basic and acidic residues) spans 129–139; the sequence is THKERFDESGK.

This sequence belongs to the TPPP family.

Its subcellular location is the cytoplasm. The protein localises to the cytosol. It is found in the cell projection. It localises to the cilium. The protein resides in the flagellum. In terms of biological role, probable regulator of microtubule dynamics required for sperm motility. In contrast to other members of the family, has no microtubule bundling activity. The chain is Tubulin polymerization-promoting protein family member 2 (TPPP2) from Macaca fascicularis (Crab-eating macaque).